The chain runs to 716 residues: ATP-dependent DNA helicase DinG (716 aa).

A Helicase ATP-binding domain is found at 17–294; sequence ALQEQIPDFI…TCMEQFRPKT (278 aa). 54–61 serves as a coordination point for ATP; that stretch reads APTGVGKT. [4Fe-4S] cluster is bound at residue cysteine 120. The short motif at 131 to 134 is the DEAH box element; it reads EPTQ. Cysteine 194, cysteine 199, and cysteine 205 together coordinate [4Fe-4S] cluster. The DEAH box signature appears at 248-251; sequence DEGH. Residues 487–698 form the Helicase C-terminal domain; it reads ALDSPFNHCE…VFPIEQPEVP (212 aa).

Belongs to the helicase family. DinG subfamily. Type 1 sub-subfamily. It depends on [4Fe-4S] cluster as a cofactor.

The catalysed reaction is Couples ATP hydrolysis with the unwinding of duplex DNA at the replication fork by translocating in the 5'-3' direction. This creates two antiparallel DNA single strands (ssDNA). The leading ssDNA polymer is the template for DNA polymerase III holoenzyme which synthesizes a continuous strand.. It catalyses the reaction ATP + H2O = ADP + phosphate + H(+). In terms of biological role, DNA-dependent ATPase and 5'-3' DNA helicase. Unwinds D-loops, R-loops, forked DNA and G-quadruplex DNA. The sequence is that of ATP-dependent DNA helicase DinG from Shigella flexneri.